The sequence spans 2194 residues: Glutamate synthase [NADH], amyloplastic (2194 aa).

The transit peptide at 1 to 101 (MSNSLSLTFT…LYDPAFDKDS (101 aa)) directs the protein to the amyloplast. Catalysis depends on C102, which acts as the Nucleophile. Residues 102–503 (CGVGFVAELN…PGMMLLVDFE (402 aa)) enclose the Glutamine amidotransferase type-2 domain. The segment at 1021 to 1045 (GGKSNTGEGGEQPSRMEPLADGSRN) is disordered. Residue 1193 to 1250 (LAETHQTLVANDLRGRTTLQTDGQLKTGRDVAIAALLGAEEYGFSTAPLITLGCIMMR) participates in FMN binding. [3Fe-4S] cluster-binding residues include C1246, C1252, and C1257. 1974 to 1988 (GGGDTGTDCIGTSIR) lines the NAD(+) pocket.

This sequence belongs to the glutamate synthase family. Monomer. It depends on [3Fe-4S] cluster as a cofactor. Requires FAD as cofactor. FMN serves as cofactor. Expressed in infected cells in root nodules. Barely detected in roots and stems.

Its subcellular location is the plastid. The protein localises to the amyloplast. The catalysed reaction is 2 L-glutamate + NAD(+) = L-glutamine + 2-oxoglutarate + NADH + H(+). It functions in the pathway amino-acid biosynthesis; L-glutamate biosynthesis via GLT pathway; L-glutamate from 2-oxoglutarate and L-glutamine (NAD(+) route): step 1/1. Its pathway is energy metabolism; nitrogen metabolism. Its activity is regulated as follows. Inhibited by malate, citrate, glutamate, NAD(+) and azaserine, but not by 2-2' dipyridil and N-ethylmaleimide. Required for the assimilation of symbiotically fixed nitrogen into amino acids in root nodules. This is Glutamate synthase [NADH], amyloplastic from Medicago sativa (Alfalfa).